Here is a 472-residue protein sequence, read N- to C-terminus: Acyltransferase PapA3 (472 aa).

Belongs to the PapA acyltransferase family.

It catalyses the reaction a long-chain fatty acyl-CoA + alpha,alpha-trehalose = a 2-O-(long-chain fatty acyl)-alpha,alpha-trehalose + CoA. The enzyme catalyses a mycolipenoyl-CoA + a 2-O-(long-chain fatty acyl)-alpha,alpha-trehalose = a 2-O-(long-chain fatty acyl)-3-O-mycolipenoyl-trehalose + CoA. It carries out the reaction alpha,alpha-trehalose + hexadecanoyl-CoA = 2-O-hexadecanoyl-alpha,alpha-trehalose + CoA. The catalysed reaction is 2-O-hexadecanoyl-alpha,alpha-trehalose + hexadecanoyl-CoA = 2-O,3-O-dihexadecanoyl-alpha,alpha-trehalose + CoA. Functionally, involved in the biosynthesis of polyacyltrehalose (PAT), a pentaacylated, trehalose-based glycolipid that could have a role in anchoring the bacterial capsule. Catalyzes the sequential transfer of two palmitoyl groups onto a single glucose residue of trehalose generating the diacylated product 2,3-diacyltrehalose (trehalose dipalmitate). The polypeptide is Acyltransferase PapA3 (papA3) (Mycobacterium tuberculosis (strain CDC 1551 / Oshkosh)).